A 312-amino-acid polypeptide reads, in one-letter code: Zinc transporter ZitB (312 aa).

5 consecutive transmembrane segments (helical) span residues 21–41, 48–68, 90–110, 123–143, and 164–184; these read LLFA…GGIL, LADA…LLAV, AAFV…WEAI, LMMV…WILH, and LLGS…GWTP.

It belongs to the cation diffusion facilitator (CDF) transporter (TC 2.A.4) family. SLC30A subfamily.

The protein resides in the cell inner membrane. Its function is as follows. Involved in zinc efflux across the cytoplasmic membrane, thus reducing zinc accumulation in the cytoplasm and rendering bacteria more resistant to zinc. It may contribute to zinc homeostasis at low concentrations of zinc. This is Zinc transporter ZitB from Salmonella typhimurium (strain LT2 / SGSC1412 / ATCC 700720).